The sequence spans 108 residues: Evasin P1127 (108 aa).

Positions 1 to 28 (MEAKTFAFLEIAMFIALGIQTFVAVTDA) are cleaved as a signal peptide. 3 disulfide bridges follow: Cys41-Cys63, Cys45-Cys65, and Cys56-Cys76. A glycan (N-linked (GlcNAc...) asparagine) is linked at Asn44. Asn89 carries an N-linked (GlcNAc...) asparagine glycan.

It localises to the secreted. Its function is as follows. Salivary chemokine-binding protein which binds to host chemokines CXCL1, CXCL2, CXCL3, CXCL5 and CXCL8. This is Evasin P1127 from Ixodes ricinus (Common tick).